Here is a 368-residue protein sequence, read N- to C-terminus: 4-hydroxy-3-methylbut-2-en-1-yl diphosphate synthase (flavodoxin) (368 aa).

Positions 268, 271, 303, and 310 each coordinate [4Fe-4S] cluster.

It belongs to the IspG family. [4Fe-4S] cluster is required as a cofactor.

The catalysed reaction is (2E)-4-hydroxy-3-methylbut-2-enyl diphosphate + oxidized [flavodoxin] + H2O + 2 H(+) = 2-C-methyl-D-erythritol 2,4-cyclic diphosphate + reduced [flavodoxin]. The protein operates within isoprenoid biosynthesis; isopentenyl diphosphate biosynthesis via DXP pathway; isopentenyl diphosphate from 1-deoxy-D-xylulose 5-phosphate: step 5/6. Functionally, converts 2C-methyl-D-erythritol 2,4-cyclodiphosphate (ME-2,4cPP) into 1-hydroxy-2-methyl-2-(E)-butenyl 4-diphosphate. In Listeria monocytogenes serotype 4b (strain CLIP80459), this protein is 4-hydroxy-3-methylbut-2-en-1-yl diphosphate synthase (flavodoxin).